Consider the following 211-residue polypeptide: Small ribosomal subunit protein eS1 (211 aa).

Residues 192–211 (NGLPPYEAVGDRATPELASY) form a disordered region.

It belongs to the eukaryotic ribosomal protein eS1 family.

The chain is Small ribosomal subunit protein eS1 from Methanopyrus kandleri (strain AV19 / DSM 6324 / JCM 9639 / NBRC 100938).